Consider the following 157-residue polypeptide: 6,7-dimethyl-8-ribityllumazine synthase (157 aa).

5-amino-6-(D-ribitylamino)uracil-binding positions include F22, A57–E59, and T81–I83. G86–T87 provides a ligand contact to (2S)-2-hydroxy-3-oxobutyl phosphate. H89 (proton donor) is an active-site residue. 5-amino-6-(D-ribitylamino)uracil is bound at residue F114. R128 lines the (2S)-2-hydroxy-3-oxobutyl phosphate pocket.

This sequence belongs to the DMRL synthase family. Forms an icosahedral capsid composed of 60 subunits, arranged as a dodecamer of pentamers.

It catalyses the reaction (2S)-2-hydroxy-3-oxobutyl phosphate + 5-amino-6-(D-ribitylamino)uracil = 6,7-dimethyl-8-(1-D-ribityl)lumazine + phosphate + 2 H2O + H(+). It functions in the pathway cofactor biosynthesis; riboflavin biosynthesis; riboflavin from 2-hydroxy-3-oxobutyl phosphate and 5-amino-6-(D-ribitylamino)uracil: step 1/2. In terms of biological role, catalyzes the formation of 6,7-dimethyl-8-ribityllumazine by condensation of 5-amino-6-(D-ribitylamino)uracil with 3,4-dihydroxy-2-butanone 4-phosphate. This is the penultimate step in the biosynthesis of riboflavin. This is 6,7-dimethyl-8-ribityllumazine synthase from Haemophilus influenzae (strain ATCC 51907 / DSM 11121 / KW20 / Rd).